We begin with the raw amino-acid sequence, 316 residues long: Phosducin-like protein 1 (316 aa).

A disordered region spans residues 1 to 61 (MEQNILNSIL…EDGDKEYEVD (61 aa)). The span at 12–41 (KFGDGDQERSDIRHNDSGDENDNHSDHEGN) shows a compositional bias: basic and acidic residues. Over residues 49–61 (EGNEDGDKEYEVD) the composition is skewed to acidic residues. Residues 95 to 290 (SDYAEHREKQ…LLSSYDIIPN (196 aa)) form the Phosducin domain. A coiled-coil region spans residues 102–156 (EKQKQKYLQKKYETQKMLEKMCFTTRDQPPPTEEENQLDSDDDDLERIRKARMEQ). Residues 175–316 (FGYFKQIDSS…RPESDDDNDD (142 aa)) are thioredoxin fold. Residues 293-316 (KAKNSNWETSLSRKRPESDDDNDD) form a disordered region.

Belongs to the phosducin family.

It localises to the cytoplasm. Its function is as follows. Required for normal chemotaxis in response to cAMP and folate. Required for the heterodimerization of the G protein beta and gamma subunits gpbA and gpgA, which is itself thought to be necessary for prenylation of the gamma subunit gpgA and its association with plasma membranes. The sequence is that of Phosducin-like protein 1 (phlp1) from Dictyostelium discoideum (Social amoeba).